A 156-amino-acid polypeptide reads, in one-letter code: ATP synthase subunit b', chloroplastic (156 aa).

Residues 20–42 (NGTLPLMALQFLTLMVLLNTIFY) traverse the membrane as a helical segment.

This sequence belongs to the ATPase B chain family. F-type ATPases have 2 components, F(1) - the catalytic core - and F(0) - the membrane proton channel. F(1) has five subunits: alpha(3), beta(3), gamma(1), delta(1), epsilon(1). F(0) has four main subunits: a(1), b(1), b'(1) and c(10-14). The alpha and beta chains form an alternating ring which encloses part of the gamma chain. F(1) is attached to F(0) by a central stalk formed by the gamma and epsilon chains, while a peripheral stalk is formed by the delta, b and b' chains.

It localises to the plastid. Its subcellular location is the chloroplast thylakoid membrane. Its function is as follows. F(1)F(0) ATP synthase produces ATP from ADP in the presence of a proton or sodium gradient. F-type ATPases consist of two structural domains, F(1) containing the extramembraneous catalytic core and F(0) containing the membrane proton channel, linked together by a central stalk and a peripheral stalk. During catalysis, ATP synthesis in the catalytic domain of F(1) is coupled via a rotary mechanism of the central stalk subunits to proton translocation. Functionally, component of the F(0) channel, it forms part of the peripheral stalk, linking F(1) to F(0). The b'-subunit is a diverged and duplicated form of b found in plants and photosynthetic bacteria. In Pyropia yezoensis (Susabi-nori), this protein is ATP synthase subunit b', chloroplastic.